Here is a 498-residue protein sequence, read N- to C-terminus: Lysine--tRNA ligase (498 aa).

Mg(2+)-binding residues include E401 and E408.

It belongs to the class-II aminoacyl-tRNA synthetase family. Homodimer. The cofactor is Mg(2+).

It is found in the cytoplasm. It carries out the reaction tRNA(Lys) + L-lysine + ATP = L-lysyl-tRNA(Lys) + AMP + diphosphate. This Dehalococcoides mccartyi (strain CBDB1) protein is Lysine--tRNA ligase.